The primary structure comprises 369 residues: NADH-quinone oxidoreductase subunit H (369 aa).

8 consecutive transmembrane segments (helical) span residues 20–40, 88–108, 133–153, 179–199, 205–225, 267–287, 293–313, and 328–348; these read VLLIKIMAVIISVMVSVAYLV, ICFLIAPIITFTLALLGWAVI, IGVLYILAISSLGVYGIIIAG, IGLTIVTVLLATGSLKLGEIV, MPYWIDLLLLPMACVFFISSL, ILINAMAVIFFFGGWYPPLNI, IPGIIWFVLKIIVLLFCFIWI, and LGWKVFLPISLLWVVLVSGVL.

The protein belongs to the complex I subunit 1 family. In terms of assembly, NDH-1 is composed of 14 different subunits. Subunits NuoA, H, J, K, L, M, N constitute the membrane sector of the complex.

It is found in the cell inner membrane. The enzyme catalyses a quinone + NADH + 5 H(+)(in) = a quinol + NAD(+) + 4 H(+)(out). Its function is as follows. NDH-1 shuttles electrons from NADH, via FMN and iron-sulfur (Fe-S) centers, to quinones in the respiratory chain. The immediate electron acceptor for the enzyme in this species is believed to be ubiquinone. Couples the redox reaction to proton translocation (for every two electrons transferred, four hydrogen ions are translocated across the cytoplasmic membrane), and thus conserves the redox energy in a proton gradient. This subunit may bind ubiquinone. In Ehrlichia canis (strain Jake), this protein is NADH-quinone oxidoreductase subunit H.